A 115-amino-acid chain; its full sequence is MTLDPKIAARLKRNADGLVTAVVQERGSGDVLMVAWMNDEALARTLQTREATYYSRSRAEQWVKGATSGHTQHVHSVRLDCDGDAVLLTVDQVGGACHTGDHSCFDAAVLLEPDD.

D80 lines the Mg(2+) pocket. C81 serves as a coordination point for Zn(2+). 2 residues coordinate Mg(2+): D82 and D84. Zn(2+) contacts are provided by C97 and C104.

The protein belongs to the PRA-CH family. As to quaternary structure, homodimer. Mg(2+) serves as cofactor. Zn(2+) is required as a cofactor.

It localises to the cytoplasm. The enzyme catalyses 1-(5-phospho-beta-D-ribosyl)-5'-AMP + H2O = 1-(5-phospho-beta-D-ribosyl)-5-[(5-phospho-beta-D-ribosylamino)methylideneamino]imidazole-4-carboxamide. Its pathway is amino-acid biosynthesis; L-histidine biosynthesis; L-histidine from 5-phospho-alpha-D-ribose 1-diphosphate: step 3/9. Its function is as follows. Catalyzes the hydrolysis of the adenine ring of phosphoribosyl-AMP. The polypeptide is Phosphoribosyl-AMP cyclohydrolase (Mycobacterium bovis (strain ATCC BAA-935 / AF2122/97)).